A 291-amino-acid chain; its full sequence is 4-diphosphocytidyl-2-C-methyl-D-erythritol kinase (291 aa).

Residue lysine 10 is part of the active site. Residue 94 to 104 coordinates ATP; the sequence is PVSAGLAGGSS. Aspartate 136 is a catalytic residue.

This sequence belongs to the GHMP kinase family. IspE subfamily.

It carries out the reaction 4-CDP-2-C-methyl-D-erythritol + ATP = 4-CDP-2-C-methyl-D-erythritol 2-phosphate + ADP + H(+). It participates in isoprenoid biosynthesis; isopentenyl diphosphate biosynthesis via DXP pathway; isopentenyl diphosphate from 1-deoxy-D-xylulose 5-phosphate: step 3/6. Its function is as follows. Catalyzes the phosphorylation of the position 2 hydroxy group of 4-diphosphocytidyl-2C-methyl-D-erythritol. This is 4-diphosphocytidyl-2-C-methyl-D-erythritol kinase from Listeria monocytogenes serotype 4a (strain HCC23).